The following is an 82-amino-acid chain: Small ribosomal subunit protein bS16 (82 aa).

This sequence belongs to the bacterial ribosomal protein bS16 family.

In Vibrio campbellii (strain ATCC BAA-1116), this protein is Small ribosomal subunit protein bS16.